Consider the following 81-residue polypeptide: Conotoxin Lt6.4 (81 aa).

A signal peptide spans 1–19; sequence MKLVLAIVLILMFLSLSAG. Residues 20-42 constitute a propeptide that is removed on maturation; the sequence is AETSDNGVSRGGHRPQYWPVTPP. 3 cysteine pairs are disulfide-bonded: cysteine 46-cysteine 60, cysteine 53-cysteine 65, and cysteine 59-cysteine 80.

This sequence belongs to the conotoxin I3 superfamily. In terms of tissue distribution, expressed by the venom duct.

The protein resides in the secreted. The polypeptide is Conotoxin Lt6.4 (Conus litteratus (Lettered cone)).